The primary structure comprises 237 residues: UDP-Gal:alpha-D-GlcNAc-diphosphoundecaprenol beta-1,4-galactosyltransferase (237 aa).

Glutamate 101 (nucleophile) is an active-site residue.

Belongs to the glycosyltransferase 26 family. Requires Mn(2+) as cofactor. The cofactor is Ni(2+). Pb(2+) serves as cofactor.

The catalysed reaction is N-acetyl-alpha-D-glucosaminyl-di-trans,octa-cis-undecaprenyl diphosphate + UDP-alpha-D-galactose = beta-D-Gal-(1-&gt;4)-alpha-D-GlcNAc-di-trans,octa-cis-undecaprenyl diphosphate + UDP + H(+). The protein operates within bacterial outer membrane biogenesis; LPS O-antigen biosynthesis. Functionally, galactosyltransferase that adds one galactose residue in the beta-1-4 linkage to GlcNAc-alpha-pyrophosphate-lipid in the biosynthesis of the O-polysaccharide repeating unit of the O antigen. This Shigella boydii protein is UDP-Gal:alpha-D-GlcNAc-diphosphoundecaprenol beta-1,4-galactosyltransferase (wfeD).